The primary structure comprises 3957 residues: Ankyrin-2 (3957 aa).

Over residues 1–14 (MMNEDAAQKSDSGE) the composition is skewed to basic and acidic residues. The disordered stretch occupies residues 1–34 (MMNEDAAQKSDSGEKFNGSSQRRKRPKKSDSNAS). ANK repeat units follow at residues 30 to 62 (DSNA…TCNQ), 63 to 92 (NGLN…SVDS), 96 to 125 (KGNT…NINA), 129 to 158 (NGFT…NQST), 162 to 191 (DGFT…KGKV), 193 to 220 (LPAL…NADV), 232 to 261 (SGFT…AVDF), 265 to 294 (NGIT…QIDA), 298 to 327 (DGLT…PLLA), 331 to 360 (NGLS…PVDD), 364 to 393 (DYLT…NPNA), 397 to 426 (NGFT…SIQA), 430 to 459 (SGLT…SPDV), 463 to 492 (RGET…LVDA), 496 to 525 (EEQT…HPDA), 529 to 558 (NGYT…AHSL), 562 to 591 (KGFT…AADS), 595 to 624 (NGLT…SPHA), 628 to 657 (NGYT…ETNI), 661 to 690 (QGVT…NIHM), 694 to 723 (SGLT…DQDA), 727 to 756 (LGYT…NVNA), 760 to 789 (NGYT…KPNA), and 793 to 822 (NGNT…EVTT). S31 and S34 each carry phosphoserine. Y378 is modified (phosphotyrosine). Y531 carries the phosphotyrosine modification. S846 carries the phosphoserine modification. T853 is subject to Phosphothreonine. Phosphoserine is present on S874. An interaction with SPTBN1 region spans residues 966–1125 (SGFLVSFMVD…ELNEILNGMD (160 aa)). ZU5 domains are found at residues 968-1156 (FLVS…VVSR) and 1158-1304 (KQDS…LIDC). Positions 1289-1423 (VSFTTNVSAR…FVKVRDTTQE (135 aa)) are UPA domain. The residue at position 1382 (Y1382) is a Phosphotyrosine. In terms of domain architecture, Death 1 spans 1450-1535 (ITLPIYTKES…SDKAGSIKVK (86 aa)). Residues 1457 to 1486 (KESESDQEQEEEIDMTSEKNDETESTETSV) are disordered. Phosphoserine occurs at positions 1459, 1461, 1473, 1500, and 1596. Acidic residues predominate over residues 1461-1471 (SDQEQEEEIDM). 7 disordered regions span residues 1670 to 2137 (AVGR…TDFS), 2197 to 2411 (ALDG…GLEL), 2430 to 2484 (AVSH…GIFP), 2507 to 2586 (SRLL…TPEE), 2604 to 2852 (EAKQ…SLPH), 2864 to 2904 (DISA…TDRF), and 2923 to 2951 (QITS…ANHT). Basic and acidic residues-rich tracts occupy residues 1674-1683 (SSEKEGKDIP) and 1711-1733 (KQKQ…KGSS). S1732, S1733, and S1736 each carry phosphoserine. A compositionally biased stretch (basic and acidic residues) spans 1766–1783 (IKDKVKALQKRVEDEQKG). Repeat A repeat units follow at residues 1806–1817 (HPAASPSLKSER), 1818–1829 (HAPGSPSPKTER), 1830–1841 (HSTLSSSAKTER), 1842–1853 (HPPVSPSSKTEK), 1854–1865 (HSPVSPSAKTER), 1866–1877 (HSPASSSSKTEK), and 1878–1889 (HSPVSPSTKTER). The repeat-rich region stretch occupies residues 1806 to 1983 (HPAASPSLKS…PVSPTSKTER (178 aa)). Phosphoserine is present on residues S1855 and S1858. Basic and acidic residues-rich tracts occupy residues 1886–1902 (KTER…ERHP) and 1921–1937 (RTEK…EKRL). A Repeat A; approximate repeat occupies 1890 to 1900 (HSPVSSTKTER). Repeat A repeat units follow at residues 1901–1912 (HPPVSPSGKTDK) and 1913–1924 (RPPVSPSGRTEK). One copy of the Repeat A; approximate repeat lies at 1925–1935 (HPPVSPGRTEK). S1929 carries the post-translational modification Phosphoserine. 4 Repeat A repeats span residues 1936-1947 (RLPVSPSGRTDK), 1948-1959 (HQPVSTAGKTEK), 1960-1971 (HLPVSPSGKTEK), and 1972-1983 (QPPVSPTSKTER). 4 stretches are compositionally biased toward basic and acidic residues: residues 1980 to 1994 (KTER…RELM), 2003 to 2034 (PSKH…KEKG), 2075 to 2093 (VKKE…HKIP), and 2102 to 2117 (EESH…KMAD). S2127 is modified (phosphoserine). Positions 2128-2137 (PDRKTSTDFS) are enriched in basic and acidic residues. T2239 is modified (phosphothreonine). Over residues 2240-2251 (PETSPESLSFSP) the composition is skewed to polar residues. S2243 is modified (phosphoserine). Residues 2252 to 2282 (KKSEEQTGETKESTKTETTTEIRSEKEHPTT) are compositionally biased toward basic and acidic residues. The residue at position 2269 (T2269) is a Phosphothreonine. S2275 is subject to Phosphoserine. Over residues 2355-2376 (TFGSSAHKTQTDSEVQESTATS) the composition is skewed to polar residues. A phosphoserine mark is found at S2405, S2440, S2454, S2516, and S2521. Residues 2523–2545 (EQTSLMESSGKSPLSPDTPSSEE) show a composition bias toward polar residues. Composition is skewed to basic and acidic residues over residues 2576–2586 (NGEKKRFTPEE) and 2604–2619 (EAKQ…KQEE). Position 2583 is a phosphothreonine (T2583). Phosphoserine occurs at positions 2679 and 2701. Residues 2696–2705 (PSSMDSNSSP) are compositionally biased toward low complexity. Positions 2729–2776 (EPGKSEEEKDSESHLAEDRHAVSTEAEDRSYDKLNRDTDQPKICDGHG) are enriched in basic and acidic residues. S2781 and S2795 each carry phosphoserine. Over residues 2781–2791 (SPSSSAAPVSS) the composition is skewed to low complexity. Polar residues predominate over residues 2892–2903 (SQDSSITTQTDR). S2956 is subject to Phosphoserine. Disordered stretches follow at residues 2987–3016 (NFEG…SSFE), 3069–3099 (LMVD…SEQN), and 3136–3462 (QESR…PTKE). A compositionally biased stretch (polar residues) spans 2998-3016 (QQESTLWEMQSDSVSSSFE). The residue at position 3075 (S3075) is a Phosphoserine. T3078 carries the phosphothreonine modification. Low complexity predominate over residues 3078–3087 (TTPDTTPART). Positions 3090-3099 (EEGTPTSEQN) are enriched in polar residues. Basic and acidic residues predominate over residues 3137 to 3149 (ESREETLSEDVKE). A compositionally biased stretch (low complexity) spans 3157–3169 (LPLETSAESLALS). A compositionally biased stretch (acidic residues) spans 3175–3194 (VDDEADLLPDDVSEEVEEIP). Polar residues-rich tracts occupy residues 3198 to 3212 (AQLN…STET) and 3256 to 3265 (LDFSTLTRSV). Phosphoserine is present on residues S3273, S3276, and S3277. Basic and acidic residues predominate over residues 3335-3344 (EENKADEAKP). Positions 3357–3374 (VEQQLSDLDTSVQKTVAP) are enriched in polar residues. A phosphoserine mark is found at S3390 and S3409. Over residues 3409–3423 (SYTETETESRERAEE) the composition is skewed to basic and acidic residues. A compositionally biased stretch (low complexity) spans 3446–3460 (SRSTTSSCRGGTSPT). Phosphoserine is present on S3474. The 85-residue stretch at 3569 to 3653 (IEERLAYIAD…DIVHLMETNT (85 aa)) folds into the Death 2 domain. S3735 is subject to Phosphoserine. Phosphothreonine occurs at positions 3776, 3797, 3803, and 3814. Positions 3777-3858 (PGTETSETQK…VESADNQPET (82 aa)) are disordered. Phosphoserine is present on S3823. Residues 3832–3841 (PSEHREESSP) show a composition bias toward basic and acidic residues. Position 3909 is a phosphoserine (S3909).

Interacts with RHBG and SPTBN1. Colocalizes with Na/K ATPase, Na/Ca exchanger and SPTBN1. Directly interacts with DMD; this interaction is necessary for DMD localization at the sarcolemma. Interacts with DCTN4; this interaction is required for DCTN4 retention at costameres. Identified in complexes that contain VIM, EZR, AHNAK, BFSP1, BFSP2, ANK2, PLEC, PRX and spectrin. Interacts (via death domain) with RABGAP1L (via Rab-GAP TBC domain). In terms of processing, phosphorylated at multiple sites by different protein kinases and each phosphorylation event regulates the protein's structure and function. In terms of tissue distribution, present in plasma membrane of neurons as well as glial cells throughout the brain. Expressed in fetal brain and in temporal cortex of adult brain. Also expressed in the inner segments of rod photoreceptors in retina.

Its subcellular location is the cytoplasm. It localises to the cytoskeleton. The protein localises to the membrane. The protein resides in the myofibril. It is found in the sarcomere. Its subcellular location is the m line. It localises to the apical cell membrane. The protein localises to the cell membrane. The protein resides in the postsynaptic cell membrane. It is found in the early endosome. Its subcellular location is the recycling endosome. It localises to the lysosome. The protein localises to the mitochondrion. The protein resides in the z line. It is found in the sarcolemma. Its subcellular location is the T-tubule. Functionally, plays an essential role in the localization and membrane stabilization of ion transporters and ion channels in several cell types, including cardiomyocytes, as well as in striated muscle cells. In skeletal muscle, required for proper localization of DMD and DCTN4 and for the formation and/or stability of a special subset of microtubules associated with costameres and neuromuscular junctions. In cardiomyocytes, required for coordinate assembly of Na/Ca exchanger, SLC8A1/NCX1, Na/K ATPases ATP1A1 and ATP1A2 and inositol 1,4,5-trisphosphate (InsP3) receptors at sarcoplasmic reticulum/sarcolemma sites. Required for expression and targeting of SPTBN1 in neonatal cardiomyocytes and for the regulation of neonatal cardiomyocyte contraction rate. In the inner segment of rod photoreceptors, required for the coordinated expression of the Na/K ATPase, Na/Ca exchanger and beta-2-spectrin (SPTBN1). Plays a role in endocytosis and intracellular protein transport. Associates with phosphatidylinositol 3-phosphate (PI3P)-positive organelles and binds dynactin to promote long-range motility of cells. Recruits RABGAP1L to (PI3P)-positive early endosomes, where RABGAP1L inactivates RAB22A, and promotes polarized trafficking to the leading edge of the migrating cells. Part of the ANK2/RABGAP1L complex which is required for the polarized recycling of fibronectin receptor ITGA5 ITGB1 to the plasma membrane that enables continuous directional cell migration. In Homo sapiens (Human), this protein is Ankyrin-2 (ANK2).